A 527-amino-acid polypeptide reads, in one-letter code: ATP-dependent RNA helicase DBP3 (527 aa).

Basic residues predominate over residues 1–11 (MSKDHKDKKRK). Positions 1 to 89 (MSKDHKDKKR…TGYSQSPALT (89 aa)) are disordered. The span at 12–24 (HSDEATEEVEKKT) shows a compositional bias: basic and acidic residues. The segment covering 25-44 (KVSKKEKKDKKEKKEKKDKK) has biased composition (basic residues). The span at 45 to 71 (EKKDKSEKKDKSEKKEKKEKKESEDVP) shows a compositional bias: basic and acidic residues. Positions 72–89 (TKSSAVVSTGYSQSPALT) are enriched in polar residues. Residues 119-145 (LGFDQIDLDSRIASVISKFPTPTPIQA) carry the Q motif motif. The region spanning 148–319 (WPYLLSGKDV…STFMNSPVKV (172 aa)) is the Helicase ATP-binding domain. 161–168 (AETGSGKT) contributes to the ATP binding site. Residues 266 to 269 (DEAD) carry the DEAD box motif. The Helicase C-terminal domain maps to 348 to 497 (KLLSLLRKYQ…PVPDELLKFG (150 aa)).

The protein belongs to the DEAD box helicase family. DDX5/DBP2 subfamily.

It is found in the nucleus. The protein localises to the nucleolus. It catalyses the reaction ATP + H2O = ADP + phosphate + H(+). Its function is as follows. ATP-dependent RNA helicase required for 60S ribosomal subunit synthesis. Involved in efficient pre-rRNA processing, predominantly at site A3, which is necessary for the normal formation of 25S and 5.8S rRNAs. The polypeptide is ATP-dependent RNA helicase DBP3 (DBP3) (Debaryomyces hansenii (strain ATCC 36239 / CBS 767 / BCRC 21394 / JCM 1990 / NBRC 0083 / IGC 2968) (Yeast)).